The following is a 266-amino-acid chain: MRLIPLRNTAEVGKWAARHIVNRINAFKPTAERPFILGLPTGGTPMEAYKYLIAMHKAGEVSFKHVVTFNMDEYVGLPKEHPESYYTFMHTNFFDHVDIPAENINLLNGNAADIDAECRRYEEKIKSYGKIHLFMGGVGVDGHIAFNEPASSLASRTRIKTLTQETRIANSRFFGGDANLVPKYALTVGVGTLLDAEEVMILVTGHGKAQALQAAVEGSINHMWTISCLQLHAKAIMVCDEPSTMELKVKTVKYFRELEAENVKDL.

Residue D72 is the Proton acceptor; for enolization step of the active site. D141 acts as the For ring-opening step in catalysis. Residue H143 is the Proton acceptor; for ring-opening step of the active site. The active-site For ring-opening step is E148.

This sequence belongs to the glucosamine/galactosamine-6-phosphate isomerase family. NagB subfamily. As to quaternary structure, homohexamer.

It catalyses the reaction alpha-D-glucosamine 6-phosphate + H2O = beta-D-fructose 6-phosphate + NH4(+). It participates in amino-sugar metabolism; N-acetylneuraminate degradation; D-fructose 6-phosphate from N-acetylneuraminate: step 5/5. Its activity is regulated as follows. Allosterically activated by N-acetylglucosamine 6-phosphate (GlcNAc6P). In terms of biological role, catalyzes the reversible isomerization-deamination of glucosamine 6-phosphate (GlcN6P) to form fructose 6-phosphate (Fru6P) and ammonium ion. The chain is Glucosamine-6-phosphate deaminase from Yersinia pestis bv. Antiqua (strain Antiqua).